Consider the following 245-residue polypeptide: Endo-chitosanase (245 aa).

The N-terminal stretch at 1 to 17 (MHFAGIVAIALATGATA) is a signal peptide.

It belongs to the glycosyl hydrolase 75 family.

The protein localises to the secreted. It catalyses the reaction Endohydrolysis of beta-(1-&gt;4)-linkages between D-glucosamine residues in a partly acetylated chitosan.. Functionally, chitosanase catalyzing the endo-type cleavage of chitosan, the deacylated form of chitin. Chitosanase may be crucial in the degradation of the deacetylated portion of chitin in the fungal cell wall. Chitoolisaccharides produced by the hydrolysis of partially N-acetylated chitosan are known to have many biological activities, including antibacterial activity, immune-enhancing effects, and elicitor activity. The protein is Endo-chitosanase (csn) of Aspergillus oryzae (strain ATCC 42149 / RIB 40) (Yellow koji mold).